Consider the following 118-residue polypeptide: Beta-2-microglobulin (118 aa).

Residues 1 to 21 form the signal peptide; it reads MGSRWGIAVLGLFCFVSCLEA. An Ig-like C1-type domain is found at 26-113; that stretch reads PKIQVYSRHP…VHEGVKKTVK (88 aa). C46 and C101 form a disulfide bridge.

Belongs to the beta-2-microglobulin family. Heterodimer of an alpha chain and a beta chain. Beta-2-microglobulin is the beta-chain of major histocompatibility complex class I molecules.

It localises to the secreted. Functionally, component of the class I major histocompatibility complex (MHC). Involved in the presentation of peptide antigens to the immune system. This is Beta-2-microglobulin (B2M) from Ornithorhynchus anatinus (Duckbill platypus).